Here is a 708-residue protein sequence, read N- to C-terminus: Phosphate acetyltransferase (708 aa).

The tract at residues 388 to 708 is phosphate acetyltransferase; sequence EFCYNLKLLS…TIALTSIQSE (321 aa).

In the N-terminal section; belongs to the CobB/CobQ family. This sequence in the C-terminal section; belongs to the phosphate acetyltransferase and butyryltransferase family. In terms of assembly, homohexamer.

The protein localises to the cytoplasm. The catalysed reaction is acetyl-CoA + phosphate = acetyl phosphate + CoA. It functions in the pathway metabolic intermediate biosynthesis; acetyl-CoA biosynthesis; acetyl-CoA from acetate: step 2/2. In terms of biological role, involved in acetate metabolism. This is Phosphate acetyltransferase (pta) from Buchnera aphidicola subsp. Acyrthosiphon pisum (strain APS) (Acyrthosiphon pisum symbiotic bacterium).